The primary structure comprises 626 residues: 4-hydroxy-3-methylbut-2-en-1-yl diphosphate synthase (flavodoxin) (626 aa).

Residues C521, C524, C555, and E562 each coordinate [4Fe-4S] cluster.

Belongs to the IspG family. [4Fe-4S] cluster serves as cofactor.

It catalyses the reaction (2E)-4-hydroxy-3-methylbut-2-enyl diphosphate + oxidized [flavodoxin] + H2O + 2 H(+) = 2-C-methyl-D-erythritol 2,4-cyclic diphosphate + reduced [flavodoxin]. The protein operates within isoprenoid biosynthesis; isopentenyl diphosphate biosynthesis via DXP pathway; isopentenyl diphosphate from 1-deoxy-D-xylulose 5-phosphate: step 5/6. Converts 2C-methyl-D-erythritol 2,4-cyclodiphosphate (ME-2,4cPP) into 1-hydroxy-2-methyl-2-(E)-butenyl 4-diphosphate. This chain is 4-hydroxy-3-methylbut-2-en-1-yl diphosphate synthase (flavodoxin), found in Bacteroides fragilis (strain YCH46).